Reading from the N-terminus, the 131-residue chain is Hypocretin neuropeptide precursor (131 aa).

Residue Q34 is modified to Pyrrolidone carboxylic acid. Intrachain disulfides connect C39–C45 and C40–C47. Residue L66 is modified to Leucine amide. The segment at 104 to 131 (EPALRPCSGRRCPSEAASSVAPGGRSGV) is disordered.

This sequence belongs to the orexin family.

The protein localises to the rough endoplasmic reticulum. The protein resides in the cytoplasmic vesicle. It is found in the synapse. Functionally, neuropeptides that play a significant role in the regulation of food intake and sleep-wakefulness, possibly by coordinating the complex behavioral and physiologic responses of these complementary homeostatic functions. A broader role in the homeostatic regulation of energy metabolism, autonomic function, hormonal balance and the regulation of body fluids, is also suggested. Its function is as follows. Binds to orexin receptors HCRTR1/OX1R and HCRTR2/OX2R with a high affinity. Stimulates food intake. Modulates pituitary luteinizing hormone secretion in an ovarian steroid-dependent manner. Binds to orexin receptor HCRTR2/OX2R only. Stimulates food intake. Modulates pituitary luteinizing hormone secretion in an ovarian steroid-dependent manner. The sequence is that of Hypocretin neuropeptide precursor (HCRT) from Bos taurus (Bovine).